The sequence spans 193 residues: MDMSSKEVLMESPPDYSAGPRSQFRIPCCPVHLKRLLIVVVVVVLVVVVIVGALLMGLHMSQKHTEMVLEMSIGAPETQKRLAPSERADTIATFSIGSTGIVVYDYQRLLTAYKPAPGTYCYIMKMAPESIPSLEAFARKLQNFRAKPSTPTSKLGQEEGHDTGSESDSSGRDLAFLGLAVSTLCGELPLYYI.

Residues 1–23 constitute a propeptide that is removed on maturation; sequence MDMSSKEVLMESPPDYSAGPRSQ. Residues C28 and C29 are each lipidated (S-palmitoyl cysteine). A propeptide spanning residues 59-193 is cleaved from the precursor; the sequence is HMSQKHTEMV…LCGELPLYYI (135 aa). Residues 94 to 193 enclose the BRICHOS domain; the sequence is FSIGSTGIVV…LCGELPLYYI (100 aa). C121 and C185 are disulfide-bonded. Residues 147-170 form a disordered region; that stretch reads KPSTPTSKLGQEEGHDTGSESDSS.

It is found in the secreted. The protein localises to the extracellular space. The protein resides in the surface film. Its function is as follows. Pulmonary surfactant associated proteins promote alveolar stability by lowering the surface tension at the air-liquid interface in the peripheral air spaces. This Mus musculus (Mouse) protein is Surfactant protein C.